Reading from the N-terminus, the 346-residue chain is 4-hydroxy-2-oxovalerate aldolase (346 aa).

In terms of domain architecture, Pyruvate carboxyltransferase spans 8-260; it reads VILHDMSLRD…ETGIDLYKIM (253 aa). 16–17 is a substrate binding site; it reads RD. Mn(2+) is bound at residue D17. Catalysis depends on H20, which acts as the Proton acceptor. 2 residues coordinate substrate: S170 and H199. Mn(2+) contacts are provided by H199 and H201. A substrate-binding site is contributed by Y290.

This sequence belongs to the 4-hydroxy-2-oxovalerate aldolase family.

It catalyses the reaction (S)-4-hydroxy-2-oxopentanoate = acetaldehyde + pyruvate. The protein operates within aromatic compound metabolism; naphthalene degradation. The polypeptide is 4-hydroxy-2-oxovalerate aldolase (nahM) (Pseudomonas putida (Arthrobacter siderocapsulatus)).